Reading from the N-terminus, the 309-residue chain is Probable manganese-dependent inorganic pyrophosphatase (309 aa).

His-9, Asp-13, Asp-15, Asp-75, His-97, and Asp-149 together coordinate Mn(2+).

It belongs to the PPase class C family. Requires Mn(2+) as cofactor.

Its subcellular location is the cytoplasm. It catalyses the reaction diphosphate + H2O = 2 phosphate + H(+). The polypeptide is Probable manganese-dependent inorganic pyrophosphatase (Exiguobacterium sp. (strain ATCC BAA-1283 / AT1b)).